We begin with the raw amino-acid sequence, 1536 residues long: Ferredoxin-dependent glutamate synthase (1536 aa).

Cys-27 acts as the For GATase activity in catalysis. One can recognise a Glutamine amidotransferase type-2 domain in the interval 27 to 427 (CGVGFIANLN…PGQMLCVDLS (401 aa)). 1105–1162 (LAEVHTTLVENSLREKVILRVDGGLRTGKDIIIAALMGAEEFGFGTVAMIATGCVMAR) lines the FMN pocket. Positions 1158, 1164, and 1169 each coordinate [3Fe-4S] cluster.

This sequence belongs to the glutamate synthase family. As to quaternary structure, monomer. Requires [3Fe-4S] cluster as cofactor. It depends on FAD as a cofactor. FMN is required as a cofactor.

It localises to the plastid. Its subcellular location is the chloroplast stroma. It carries out the reaction 2 oxidized [2Fe-2S]-[ferredoxin] + 2 L-glutamate = L-glutamine + 2 reduced [2Fe-2S]-[ferredoxin] + 2-oxoglutarate + 2 H(+). Its pathway is amino-acid biosynthesis; L-glutamate biosynthesis via GLT pathway; L-glutamate from 2-oxoglutarate and L-glutamine (ferredoxin route): step 1/1. The protein operates within energy metabolism; nitrogen metabolism. The protein is Ferredoxin-dependent glutamate synthase (gltB) of Antithamnion sp. (Red alga).